Reading from the N-terminus, the 126-residue chain is Acidic phospholipase A2 S1E6-a (126 aa).

Positions 1–3 are cleaved as a signal peptide; it reads VEG. 7 cysteine pairs are disulfide-bonded: Cys-29-Cys-119, Cys-31-Cys-47, Cys-46-Cys-98, Cys-52-Cys-126, Cys-53-Cys-91, Cys-60-Cys-84, and Cys-78-Cys-89. Positions 30, 32, and 34 each coordinate Ca(2+). His-50 is an active-site residue. Asp-51 contributes to the Ca(2+) binding site. Asp-92 is a catalytic residue.

Homodimer. Requires Ca(2+) as cofactor. In terms of tissue distribution, expressed by the venom gland.

Its subcellular location is the secreted. The catalysed reaction is a 1,2-diacyl-sn-glycero-3-phosphocholine + H2O = a 1-acyl-sn-glycero-3-phosphocholine + a fatty acid + H(+). In terms of biological role, snake venom phospholipase A2 (PLA2) that inhibits ADP-induced platelet aggregation. PLA2 catalyzes the calcium-dependent hydrolysis of the 2-acyl groups in 3-sn-phosphoglycerides. This Calloselasma rhodostoma (Malayan pit viper) protein is Acidic phospholipase A2 S1E6-a.